The sequence spans 148 residues: 3-dehydroquinate dehydratase (148 aa).

Tyrosine 22 (proton acceptor) is an active-site residue. Substrate contacts are provided by asparagine 73, histidine 79, and aspartate 86. The active-site Proton donor is histidine 99. Substrate-binding positions include 100–101 (LS) and arginine 110.

Belongs to the type-II 3-dehydroquinase family. As to quaternary structure, homododecamer.

It catalyses the reaction 3-dehydroquinate = 3-dehydroshikimate + H2O. It participates in metabolic intermediate biosynthesis; chorismate biosynthesis; chorismate from D-erythrose 4-phosphate and phosphoenolpyruvate: step 3/7. In terms of biological role, catalyzes a trans-dehydration via an enolate intermediate. This chain is 3-dehydroquinate dehydratase, found in Jannaschia sp. (strain CCS1).